The chain runs to 125 residues: Photoactive yellow protein (125 aa).

Positions 23–86 constitute a PAS domain; the sequence is IDDLAFGAIQ…GRFREGVANG (64 aa). Position 69 is an S-(4-hydroxycinnamyl)cysteine (cysteine 69).

It belongs to the photoactive yellow protein family. In terms of processing, the 4-hydroxycinnamic acid (p-coumaric acid) chromophore is covalently bound via a thioester linkage.

In terms of biological role, this photoactive protein is a photoreceptor with kinetics similar to that of rhodopsin. The protein is Photoactive yellow protein (pyp) of Rhodothalassium salexigens (Rhodospirillum salexigens).